Here is a 179-residue protein sequence, read N- to C-terminus: Lebocin-4 (179 aa).

The first 16 residues, 1–16 (MYKFLVFSSVLVLFFA), serve as a signal peptide directing secretion. Positions 17-120 (QASCQRFIQP…RPIESHRNTR (104 aa)) are excised as a propeptide. Thr135 is a glycosylation site (O-linked (GalNAc...) threonine). Residues 153 to 179 (RRHASDDQEELRHHNEHFLIPRDILQD) constitute a propeptide that is removed on maturation.

Belongs to the lebocin family. O-glycosylation is important for the antibacterial activity of lebocin. Hemolymph. Produced in fat body.

It is found in the secreted. In terms of biological role, antibacterial peptide. This is Lebocin-4 (LEB4) from Bombyx mori (Silk moth).